The chain runs to 321 residues: Biotin synthase (321 aa).

Residues R44–R270 form the Radical SAM core domain. 3 residues coordinate [4Fe-4S] cluster: C59, C63, and C66. C103, C135, C195, and R265 together coordinate [2Fe-2S] cluster.

The protein belongs to the radical SAM superfamily. Biotin synthase family. Homodimer. Requires [4Fe-4S] cluster as cofactor. It depends on [2Fe-2S] cluster as a cofactor.

The enzyme catalyses (4R,5S)-dethiobiotin + (sulfur carrier)-SH + 2 reduced [2Fe-2S]-[ferredoxin] + 2 S-adenosyl-L-methionine = (sulfur carrier)-H + biotin + 2 5'-deoxyadenosine + 2 L-methionine + 2 oxidized [2Fe-2S]-[ferredoxin]. Its pathway is cofactor biosynthesis; biotin biosynthesis; biotin from 7,8-diaminononanoate: step 2/2. Catalyzes the conversion of dethiobiotin (DTB) to biotin by the insertion of a sulfur atom into dethiobiotin via a radical-based mechanism. The protein is Biotin synthase of Magnetococcus marinus (strain ATCC BAA-1437 / JCM 17883 / MC-1).